The primary structure comprises 218 residues: uncharacterized protein (218 aa).

Residues 11-31 (AAGLFPLALMLSGCISYALVS) form a helical membrane-spanning segment.

It localises to the membrane. This is an uncharacterized protein from Escherichia coli (strain K12).